We begin with the raw amino-acid sequence, 297 residues long: Probable porphobilinogen deaminase (297 aa).

Cys233 carries the S-(dipyrrolylmethanemethyl)cysteine modification.

It belongs to the HMBS family. It depends on dipyrromethane as a cofactor.

The enzyme catalyses 4 porphobilinogen + H2O = hydroxymethylbilane + 4 NH4(+). It functions in the pathway porphyrin-containing compound metabolism; protoporphyrin-IX biosynthesis; coproporphyrinogen-III from 5-aminolevulinate: step 2/4. In terms of biological role, tetrapolymerization of the monopyrrole PBG into the hydroxymethylbilane pre-uroporphyrinogen in several discrete steps. The protein is Probable porphobilinogen deaminase of Thermoplasma volcanium (strain ATCC 51530 / DSM 4299 / JCM 9571 / NBRC 15438 / GSS1).